The chain runs to 403 residues: Probable N-acetyltransferase HLS1 (403 aa).

Residues 2–177 form the N-acetyltransferase domain; that stretch reads TVVREYDPTR…VNPVYAHRVN (176 aa).

The protein belongs to the acetyltransferase family.

In terms of biological role, ethylene-responsive N-acetyltransferase required for differential cell elongation in the hypocotyl. Regulates apical hook formation of dark-grown seedlings. May control differential cell growth by regulating auxin activity. May be involved in negative feedback regulation of auxin homeostasis through the control of GH3-like genes. Modulates de novo shoot organogenesis. This chain is Probable N-acetyltransferase HLS1 (HLS1), found in Arabidopsis thaliana (Mouse-ear cress).